The primary structure comprises 35 residues: Riboflavin-binding protein (35 aa).

A disulfide bond links C5 and C32.

This sequence belongs to the folate receptor family.

Functionally, required for the transport of riboflavin to the developing oocyte. This Struthio camelus (Common ostrich) protein is Riboflavin-binding protein.